The following is a 911-amino-acid chain: MPKAGGSEWATLWIIDALENNKFPYFSWFDRNNLLFAAPAPLPAGSDIPPGWYSVYHAFDEECDRVYGPSPVVGQTVYGRFGRLLRGTRRAVVRNDLRYSDTFGGSYVVWQLVRTPFKNCTYCYGAAYGPEKLQRFIQCLLSPPMQTTATRRSDTREQSYEEAGAAAPAPPKAPSGLRGRPRKSNRYYNVGDITTEQKAACSVWIPVNEGASTSGMGSSGTRQVTQASSFTWRVPGDPPAPSTLTGPSDPHSSGAGLPGTAPPKPQHETRLAGTVSGVSGVAQTPGDTGQLAPPMRDGSRLPSTSPWIPACFPWGDLPVTGWWPQGASGLPEKVHPPTTGQFDPLSPRWTYTGIPSSQLNPAAPSWIPPHAQAGTFVGEFSQGAPLAPQGLLPQSGQCASAWLPRRETGAEGACGASTEGRAPQGAASERVYPFEPQPPSAPAPGYAKPSCYNWSPLAEPPATRPIRAPVWHPPVGHAVVPEVRTPLWIPWSSGGAPNQGLSHTQGGASATPSAGAPPTPEVAERQEPSSSGIPYVCQGDNMATGYRRVTTSSGALEVEIIDLTGDSDTPSTTVASTPLPVSGPRVFQPTVLYSAPEPAVNPEVSHLPTELERRECVCPGSGERPRVPLVSTYAGDRYAVGGYGPEQSLVPPPLGLPLTLSNLQGEDICTWEEGLGNILSELQEEPSSSTRQATDRRRPRSRSPHGRRTPVSHSGPEKPPSKMFFDPPDSQRVSFVVEIFVYGNLRGTLRREGDAGEAMLCSWPVGDTLGHLCQSFVPELLRIPRLTVPSPEQMEILNRVFEGLGHGFPIFCSMSGIYSRNATQVEGWWFGNPNSRYERILRSFSPRVPQQLFNTARYLATTAAIPQTPLSVNPVTCGTVFFGASPASTENFQNVPLTVKIFIGSIWDSLH.

The IRF tryptophan pentad repeat DNA-binding region spans 7–114; it reads SEWATLWIID…GSYVVWQLVR (108 aa). 4 disordered regions span residues 147–184, 211–302, 494–537, and 681–727; these read TTAT…PRKS, ASTS…SRLP, GGAP…PYVC, and ELQE…FFDP. Over residues 211 to 221 the composition is skewed to low complexity; the sequence is ASTSGMGSSGT. 2 stretches are compositionally biased toward polar residues: residues 222 to 231 and 495 to 505; these read RQVTQASSFT and GAPNQGLSHTQ. Over residues 697 to 710 the composition is skewed to basic residues; the sequence is RRPRSRSPHGRRTP.

This sequence belongs to the IRF family. In terms of assembly, interacts with host MDM2; this interaction facilitates the proteasomal degradation of TP53/p53. Interacts with host IRF7; this interaction prevents IRF7 dimerization and subsequent activation.

It localises to the host nucleus. Its function is as follows. Plays a role in host cell apoptosis modulation by promoting TP53/p53 ubiquitination and subsequent degradation and thus down-regulating TP53/p53-mediated apoptosis. Works as a potential viral transcription factor to modulate host gene expression to build favorable environments for the viral lytic life cycle and greatly accelerates the induction of an immediate early gene RTA, early genes ORF36 and ORF57, late genes ORF25 and ORF64, and latent genes LANA1 and v-IRF3. Inhibits host interferon-alpha production by interacting with host IRF7 and preventing IRF7 dimerization. The chain is Viral IRF4-like protein (vIRF-4) from Homo sapiens (Human).